We begin with the raw amino-acid sequence, 304 residues long: Killer cell immunoglobulin-like receptor 2DS5 (304 aa).

The first 21 residues, 1–21 (MSLMVISMACVAFFLLQGAWP), serve as a signal peptide directing secretion. Residues 22 to 245 (HEGFRRKPSL…SETGNPRHLH (224 aa)) are Extracellular-facing. 2 Ig-like C2-type domains span residues 42 to 107 (EETV…VTHS) and 142 to 205 (GESV…FRDS). 2 disulfides stabilise this stretch: C49/C100 and C149/C198. N-linked (GlcNAc...) asparagine glycans are attached at residues N67, N84, N178, and N223. A helical membrane pass occupies residues 246–264 (VLIGTSVVKLPFTILLFFL). Residues 265–304 (LHRWCSNKKNASVMDQGPAGNRTVNREDSDEQDHQEVSYA) lie on the Cytoplasmic side of the membrane. Residues 275–304 (ASVMDQGPAGNRTVNREDSDEQDHQEVSYA) are disordered. Positions 288–304 (VNREDSDEQDHQEVSYA) are enriched in basic and acidic residues.

Belongs to the immunoglobulin superfamily. As to quaternary structure, interacts with TYROBP. Post-translationally, N-glycosylated, glycosylation varies depending on the allele which alters cell surface expression levels. Expressed on a discrete subset of peripheral blood NK cells.

Its subcellular location is the cell membrane. Activating natural killer (NK) receptor that recognizes C2 epitopes of HLA-C alleles. Bridging the innate and adaptive immune systems, NK cells express a number of cell surface receptors which either inhibit or stimulate their cytotoxicity. Able to activate NK cells citotoxicity and cytokine production such as IFNG. Receptor functions are attenuated even lost in some alleles, such as KIR2DS5*002 represented in this entry. This chain is Killer cell immunoglobulin-like receptor 2DS5, found in Homo sapiens (Human).